The sequence spans 339 residues: Zinc transporter 3 (339 aa).

A signal peptide spans 1 to 25; the sequence is MKTKNVKLLFFFFSVSLLLIAVVNA. Residues 26-54 lie on the Extracellular side of the membrane; that stretch reads AEGHSHGGPKCECSHEDDHENKAGARKYK. A helical membrane pass occupies residues 55-75; that stretch reads IAAIPTVLIAGIIGVLFPLLG. Residues 76 to 86 lie on the Cytoplasmic side of the membrane; the sequence is KVFPSLRPETC. Residues 87–107 traverse the membrane as a helical segment; it reads FFFVTKAFAAGVILATGFMHV. At 108 to 123 the chain is on the extracellular side; that stretch reads LPEAYEMLNSPCLTSE. A helical transmembrane segment spans residues 124-144; it reads AWEFPFTGFIAMIAAILTLSV. Over 145–184 the chain is Cytoplasmic; the sequence is DTFATSSFYKSHCKASKRVSDGETGESSVDSEKVQILRTR. A helical membrane pass occupies residues 185-205; that stretch reads VIAQVLELGIIVHSVVIGISL. Topologically, residues 206–216 are extracellular; that stretch reads GASQSPDAAKA. Residues 217–237 traverse the membrane as a helical segment; sequence LFIALMFHQCFEGLGLGGCIA. Over 238–247 the chain is Cytoplasmic; sequence QGKFKCLSVT. A helical transmembrane segment spans residues 248–268; it reads IMSTFFAITTPIGIVVGMGIA. At 269 to 278 the chain is on the extracellular side; sequence NSYDESSPTA. A helical transmembrane segment spans residues 279–299; it reads LIVQGVLNAASAGILIYMSLV. Residues 300 to 315 lie on the Cytoplasmic side of the membrane; that stretch reads DLLAADFTHPKMQSNT. Residues 316 to 336 form a helical membrane-spanning segment; the sequence is GLQIMAHIALLLGAGLMSLLA. The Extracellular segment spans residues 337-339; sequence KWA.

This sequence belongs to the ZIP transporter (TC 2.A.5) family. In terms of tissue distribution, expressed predominantly in the roots of zinc-deficient plants.

It is found in the cell membrane. In terms of biological role, mediates zinc uptake from the rhizosphere. May also transport other divalent cations. The polypeptide is Zinc transporter 3 (ZIP3) (Arabidopsis thaliana (Mouse-ear cress)).